Reading from the N-terminus, the 93-residue chain is uncharacterized protein (93 aa).

This is an uncharacterized protein from Bacillus subtilis (strain 168).